Consider the following 471-residue polypeptide: U1 small nuclear ribonucleoprotein 70 kDa (471 aa).

Positions 48-78 are disordered; that stretch reads FEDPRDAPPPTRAETREERMERKRREKIERR. Over residues 60–78 the composition is skewed to basic and acidic residues; it reads AETREERMERKRREKIERR. The tract at residues 92–202 is required for interaction with U1 RNA; sequence HNDQNAQGDA…GGGLGGTRRG (111 aa). The region spanning 103–184 is the RRM domain; the sequence is KTLFVARVNY…LVDVERGRTV (82 aa). The disordered stretch occupies residues 187 to 471; that stretch reads WRPRRLGGGL…NGYMMEPPME (285 aa). The span at 192-201 shows a compositional bias: gly residues; sequence LGGGLGGTRR. The span at 207-245 shows a compositional bias: basic and acidic residues; the sequence is NIRHSGRDDTSRYDERDRDRERERDRRERSRERDKERER. The segment covering 246–259 has biased composition (basic residues); that stretch reads RRSRSRERRRRSRS. The span at 260–293 shows a compositional bias: basic and acidic residues; the sequence is REKEERKRSRERSRDKDKDKDKDKDKEKDKDKDR. Basic residues predominate over residues 294–303; it reads DRKRRSRSRE. Basic and acidic residues-rich tracts occupy residues 304 to 321 and 344 to 428; these read RKRERDRDREKKEDRVEG and IELK…ERVP.

In terms of assembly, component of the U1 snRNP. The U1 snRNP is composed of the U1 snRNA and the 7 core Sm proteins snrpb, snrpd1, snrpd2, snrpd3, snrpe, snrpf and snrpg that assemble in a heptameric protein ring on the Sm site of the small nuclear RNA to form the core snRNP, and at least three U1 snRNP-specific proteins snrnp70/U1-70K, snrpa/U1-A and snrpc/U1-C.

It localises to the nucleus speckle. Its subcellular location is the nucleus. The protein localises to the nucleoplasm. Its function is as follows. Component of the spliceosomal U1 snRNP, which is essential for recognition of the pre-mRNA 5' splice-site and the subsequent assembly of the spliceosome. snrnp70 binds to the loop I region of U1-snRNA. The sequence is that of U1 small nuclear ribonucleoprotein 70 kDa (snrnp70) from Xenopus tropicalis (Western clawed frog).